The sequence spans 609 residues: UvrABC system protein C (609 aa).

In terms of domain architecture, GIY-YIG spans 16-94 (SSAGVYRMYD…IKQYMPKYNV (79 aa)). The 36-residue stretch at 203-238 (KQVISELVAKMEEAAGQQAYEQAARFRDQIMALRRV) folds into the UVR domain.

This sequence belongs to the UvrC family. Interacts with UvrB in an incision complex.

It localises to the cytoplasm. The UvrABC repair system catalyzes the recognition and processing of DNA lesions. UvrC both incises the 5' and 3' sides of the lesion. The N-terminal half is responsible for the 3' incision and the C-terminal half is responsible for the 5' incision. The chain is UvrABC system protein C from Shewanella sp. (strain ANA-3).